The chain runs to 593 residues: Mitoguardin 2 (593 aa).

The next 2 helical transmembrane spans lie at 11–31 (MIQA…TTFG) and 42–62 (PGLR…ALAA). 2 disordered regions span residues 103–141 (GYSS…VASM) and 196–231 (SVGQ…SQRK). Composition is skewed to low complexity over residues 106–116 (SRRVQSPSSKS) and 123–141 (ISSI…VASM). A Phosphoserine modification is found at serine 132. Position 206 is a phosphothreonine (threonine 206). Residues serine 220, serine 224, and serine 228 each carry the phosphoserine modification. Residue threonine 273 is modified to Phosphothreonine. 2 positions are modified to phosphoserine: serine 276 and serine 295. The short motif at 292–298 (SFFSATE) is the FFAT element.

This sequence belongs to the mitoguardin family. In terms of assembly, homodimer and heterodimer; forms heterodimers with MIGA1. Interacts with PLD6/MitoPLD. Interacts (via phosphorylated FFAT motif) with MOSPD2, VAPA and VAPB. Phosphorylation at Ser-295 of the FFAT motif activates interaction with MOSPD2, VAPA and VAPB.

Its subcellular location is the mitochondrion outer membrane. Regulator of mitochondrial fusion: acts by forming homo- and heterodimers at the mitochondrial outer membrane and facilitating the formation of PLD6/MitoPLD dimers. May act by regulating phospholipid metabolism via PLD6/MitoPLD. This is Mitoguardin 2 from Homo sapiens (Human).